Consider the following 353-residue polypeptide: Photosystem II D2 protein (353 aa).

Position 2 is an N-acetylthreonine (Thr-2). Residue Thr-2 is modified to Phosphothreonine. The chain crosses the membrane as a helical span at residues 41 to 61 (CAYFALGGWFTGTTFVTSWYT). His-118 contributes to the chlorophyll a binding site. The chain crosses the membrane as a helical span at residues 125–141 (GFMLRQFELARSVQLRP). Residues Gln-130 and Asn-143 each contribute to the pheophytin a site. The chain crosses the membrane as a helical span at residues 153 to 166 (VFVSVFLIYPLGQS). His-198 lines the chlorophyll a pocket. Residues 208–228 (AALLCAIHGATVENTLFEDGD) traverse the membrane as a helical segment. A plastoquinone-binding residues include His-215 and Phe-262. His-215 contacts Fe cation. His-269 provides a ligand contact to Fe cation. Residues 279–295 (GLWMSAIGVVGLALNLR) traverse the membrane as a helical segment.

It belongs to the reaction center PufL/M/PsbA/D family. In terms of assembly, PSII is composed of 1 copy each of membrane proteins PsbA, PsbB, PsbC, PsbD, PsbE, PsbF, PsbH, PsbI, PsbJ, PsbK, PsbL, PsbM, PsbT, PsbX, PsbY, PsbZ, Psb30/Ycf12, at least 3 peripheral proteins of the oxygen-evolving complex and a large number of cofactors. It forms dimeric complexes. Requires The D1/D2 heterodimer binds P680, chlorophylls that are the primary electron donor of PSII, and subsequent electron acceptors. It shares a non-heme iron and each subunit binds pheophytin, quinone, additional chlorophylls, carotenoids and lipids. There is also a Cl(-1) ion associated with D1 and D2, which is required for oxygen evolution. The PSII complex binds additional chlorophylls, carotenoids and specific lipids. as cofactor.

The protein localises to the plastid. The protein resides in the chloroplast thylakoid membrane. It carries out the reaction 2 a plastoquinone + 4 hnu + 2 H2O = 2 a plastoquinol + O2. Photosystem II (PSII) is a light-driven water:plastoquinone oxidoreductase that uses light energy to abstract electrons from H(2)O, generating O(2) and a proton gradient subsequently used for ATP formation. It consists of a core antenna complex that captures photons, and an electron transfer chain that converts photonic excitation into a charge separation. The D1/D2 (PsbA/PsbD) reaction center heterodimer binds P680, the primary electron donor of PSII as well as several subsequent electron acceptors. D2 is needed for assembly of a stable PSII complex. The polypeptide is Photosystem II D2 protein (Welwitschia mirabilis (Tree tumbo)).